Here is a 106-residue protein sequence, read N- to C-terminus: Integration host factor subunit alpha (106 aa).

Belongs to the bacterial histone-like protein family. As to quaternary structure, heterodimer of an alpha and a beta chain.

In terms of biological role, this protein is one of the two subunits of integration host factor, a specific DNA-binding protein that functions in genetic recombination as well as in transcriptional and translational control. The sequence is that of Integration host factor subunit alpha from Nitrobacter winogradskyi (strain ATCC 25391 / DSM 10237 / CIP 104748 / NCIMB 11846 / Nb-255).